The sequence spans 383 residues: Chaperone protein DnaJ (383 aa).

The J domain maps to 6–70 (DYYDVLGVGR…QKRAAYDQYG (65 aa)). The segment at 140–222 (GKETKISYSR…CHGTGREEER (83 aa)) adopts a CR-type zinc-finger fold. Zn(2+)-binding residues include Cys-153, Cys-156, Cys-170, Cys-173, Cys-196, Cys-199, Cys-210, and Cys-213. CXXCXGXG motif repeat units follow at residues 153 to 160 (CHTCHGSG), 170 to 177 (CHKCHGAG), 196 to 203 (CDVCGGTG), and 210 to 217 (CDTCHGTG).

This sequence belongs to the DnaJ family. As to quaternary structure, homodimer. It depends on Zn(2+) as a cofactor.

The protein localises to the cytoplasm. Participates actively in the response to hyperosmotic and heat shock by preventing the aggregation of stress-denatured proteins and by disaggregating proteins, also in an autonomous, DnaK-independent fashion. Unfolded proteins bind initially to DnaJ; upon interaction with the DnaJ-bound protein, DnaK hydrolyzes its bound ATP, resulting in the formation of a stable complex. GrpE releases ADP from DnaK; ATP binding to DnaK triggers the release of the substrate protein, thus completing the reaction cycle. Several rounds of ATP-dependent interactions between DnaJ, DnaK and GrpE are required for fully efficient folding. Also involved, together with DnaK and GrpE, in the DNA replication of plasmids through activation of initiation proteins. The polypeptide is Chaperone protein DnaJ (Latilactobacillus sakei (Lactobacillus sakei)).